A 267-amino-acid chain; its full sequence is Probable ribosomal RNA small subunit methyltransferase A (267 aa).

The S-adenosyl-L-methionine site is built by Leu12, Gly37, Glu58, Asp83, and Asn100.

Belongs to the class I-like SAM-binding methyltransferase superfamily. rRNA adenine N(6)-methyltransferase family. RsmA subfamily.

The protein localises to the cytoplasm. Its function is as follows. Specifically dimethylates two adjacent adenosines in the loop of a conserved hairpin near the 3'-end of 16S rRNA in the 30S particle. May play a critical role in biogenesis of 30S subunits. This is Probable ribosomal RNA small subunit methyltransferase A from Methanococcus vannielii (strain ATCC 35089 / DSM 1224 / JCM 13029 / OCM 148 / SB).